A 335-amino-acid chain; its full sequence is DNA-directed RNA polymerase subunit alpha (335 aa).

Residues 1–231 (MVREKITVST…DLLIPFLHTK (231 aa)) are alpha N-terminal domain (alpha-NTD). Positions 263–335 (KKMALKSIFI…FVIDLPKNKF (73 aa)) are alpha C-terminal domain (alpha-CTD).

Belongs to the RNA polymerase alpha chain family. As to quaternary structure, in plastids the minimal PEP RNA polymerase catalytic core is composed of four subunits: alpha, beta, beta', and beta''. When a (nuclear-encoded) sigma factor is associated with the core the holoenzyme is formed, which can initiate transcription.

Its subcellular location is the plastid. It localises to the chloroplast. It carries out the reaction RNA(n) + a ribonucleoside 5'-triphosphate = RNA(n+1) + diphosphate. DNA-dependent RNA polymerase catalyzes the transcription of DNA into RNA using the four ribonucleoside triphosphates as substrates. In Lactuca sativa (Garden lettuce), this protein is DNA-directed RNA polymerase subunit alpha.